The sequence spans 1624 residues: Reverse gyrase (1624 aa).

An RG N-terminal-type zinc finger spans residues 1 to 42 (MKAIYRGMCPNCRGAITDERLSNKNPCEGCLSEPILSEDYNE). 4 residues coordinate Zn(2+): Cys9, Cys12, Cys27, and Cys30. ATP contacts are provided by residues Gln89 and 106–113 (APTGMGKS). The Helicase ATP-binding domain occupies 93-256 (VKRIIRGKSF…KLKKQLAKLL (164 aa)). The short motif at 213–216 (DDVD) is the DEAD box element. The segment at 636-1624 (DLVKSALMIV…LYEEIKRYVR (989 aa)) is topoisomerase I. The Toprim domain occupies 640–803 (SALMIVESPN…NIKRIEFHEV (164 aa)). Glu646 serves as a coordination point for Mg(2+). The RG C-terminal-type zinc finger occupies 720–749 (IKRCRDCGHQFVDWEQKGVCPRCGSRNVHD). Zn(2+) is bound by residues Cys723, Cys726, Cys739, and Cys742. Position 772 (Asp772) interacts with Mg(2+). The Topo IA-type catalytic domain maps to 819-1623 (NEDRVNAQLV…ELYEEIKRYV (805 aa)). In terms of domain architecture, DOD-type homing endonuclease spans 1107-1222 (IFGVILGKGT…LSVYLYQIGI (116 aa)). Tyr1366 acts as the O-(5'-phospho-DNA)-tyrosine intermediate in catalysis.

It in the N-terminal section; belongs to the DEAD box helicase family. DDVD subfamily. The protein in the C-terminal section; belongs to the type IA topoisomerase family. As to quaternary structure, monomer. The cofactor is Zn(2+). Mg(2+) is required as a cofactor. In terms of processing, this protein undergoes a protein self splicing that involves a post-translational excision of the intervening region (intein) followed by peptide ligation.

The protein resides in the cytoplasm. It carries out the reaction ATP + H2O = ADP + phosphate + H(+). Modifies the topological state of DNA by introducing positive supercoils in an ATP-dependent process, increasing the linking number in steps of +1. Binds to single-stranded DNA, transiently cleaves and then rejoins the ends, introducing a positive supercoil in the process. The scissile phosphodiester is attacked by the catalytic tyrosine of the enzyme, resulting in the formation of a DNA-(5'-phosphotyrosyl)-enzyme intermediate. Probably involved in rewinding DNA strands in regions of the chromosome that have opened up to allow replication, transcription, DNA repair and/or for DNA protection. This is Reverse gyrase from Pyrococcus horikoshii (strain ATCC 700860 / DSM 12428 / JCM 9974 / NBRC 100139 / OT-3).